Consider the following 275-residue polypeptide: Endolytic peptidoglycan transglycosylase RlpA (275 aa).

Residues 1-22 form the signal peptide; that stretch reads MQIKTITLKLSAVSLGALFFSG. A lipid anchor (N-palmitoyl cysteine) is attached at Cys23. Cys23 carries S-diacylglycerol cysteine lipidation. An SPOR domain is found at 200-275; it reads IYEGGNFMVQ…AFAGAFVVRE (76 aa).

This sequence belongs to the RlpA family.

The protein resides in the cell membrane. Lytic transglycosylase with a strong preference for naked glycan strands that lack stem peptides. The chain is Endolytic peptidoglycan transglycosylase RlpA from Campylobacter jejuni subsp. jejuni serotype O:2 (strain ATCC 700819 / NCTC 11168).